Reading from the N-terminus, the 189-residue chain is Phosphoheptose isomerase (189 aa).

Positions 34–189 (LVEAFRKGNK…CDLVEKALFA (156 aa)) constitute an SIS domain. Residue 49 to 51 (NGG) participates in substrate binding. Zn(2+) is bound by residues His58 and Glu62. Substrate-binding positions include Glu62, 91–92 (ND), 117–119 (STS), Ser122, and Gln169. 2 residues coordinate Zn(2+): Gln169 and His177.

The protein belongs to the SIS family. GmhA subfamily. Homotetramer. Zn(2+) is required as a cofactor.

The protein localises to the cytoplasm. It catalyses the reaction 2 D-sedoheptulose 7-phosphate = D-glycero-alpha-D-manno-heptose 7-phosphate + D-glycero-beta-D-manno-heptose 7-phosphate. It participates in carbohydrate biosynthesis; D-glycero-D-manno-heptose 7-phosphate biosynthesis; D-glycero-alpha-D-manno-heptose 7-phosphate and D-glycero-beta-D-manno-heptose 7-phosphate from sedoheptulose 7-phosphate: step 1/1. Catalyzes the isomerization of sedoheptulose 7-phosphate in D-glycero-D-manno-heptose 7-phosphate. The sequence is that of Phosphoheptose isomerase from Pelobacter propionicus (strain DSM 2379 / NBRC 103807 / OttBd1).